A 148-amino-acid polypeptide reads, in one-letter code: D-aminoacyl-tRNA deacylase (148 aa).

Residues 137–138 (GP) carry the Gly-cisPro motif, important for rejection of L-amino acids motif.

This sequence belongs to the DTD family. Homodimer.

It localises to the cytoplasm. It catalyses the reaction glycyl-tRNA(Ala) + H2O = tRNA(Ala) + glycine + H(+). The catalysed reaction is a D-aminoacyl-tRNA + H2O = a tRNA + a D-alpha-amino acid + H(+). An aminoacyl-tRNA editing enzyme that deacylates mischarged D-aminoacyl-tRNAs. Also deacylates mischarged glycyl-tRNA(Ala), protecting cells against glycine mischarging by AlaRS. Acts via tRNA-based rather than protein-based catalysis; rejects L-amino acids rather than detecting D-amino acids in the active site. By recycling D-aminoacyl-tRNA to D-amino acids and free tRNA molecules, this enzyme counteracts the toxicity associated with the formation of D-aminoacyl-tRNA entities in vivo and helps enforce protein L-homochirality. This Enterococcus faecalis (strain ATCC 700802 / V583) protein is D-aminoacyl-tRNA deacylase.